The chain runs to 201 residues: Small ribosomal subunit protein uS5 (201 aa).

Residues 1-28 (MAHQNEQRGGGDRGRGRGRGRDRDQERD) form a disordered region. Residues 31–94 (LVDKLVHINR…DEAKKNMIRV (64 aa)) form the S5 DRBM domain. A disordered region spans residues 173 to 201 (SVAAKRGLKVGDLVNRRDDGASSPEAIEA).

This sequence belongs to the universal ribosomal protein uS5 family. As to quaternary structure, part of the 30S ribosomal subunit. Contacts proteins S4 and S8.

With S4 and S12 plays an important role in translational accuracy. In terms of biological role, located at the back of the 30S subunit body where it stabilizes the conformation of the head with respect to the body. The protein is Small ribosomal subunit protein uS5 of Maricaulis maris (strain MCS10) (Caulobacter maris).